The primary structure comprises 352 residues: Protein RecA (352 aa).

67 to 74 (GPESSGKT) lines the ATP pocket.

This sequence belongs to the RecA family.

It is found in the cytoplasm. Functionally, can catalyze the hydrolysis of ATP in the presence of single-stranded DNA, the ATP-dependent uptake of single-stranded DNA by duplex DNA, and the ATP-dependent hybridization of homologous single-stranded DNAs. It interacts with LexA causing its activation and leading to its autocatalytic cleavage. This is Protein RecA from Enterobacter sp. (strain 638).